Reading from the N-terminus, the 334-residue chain is Tryptophan--tRNA ligase (334 aa).

Residues 11–13 (QPS) and 19–20 (GN) contribute to the ATP site. The 'HIGH' region motif lies at 12 to 20 (PSGELTIGN). Asp135 is a binding site for L-tryptophan. ATP contacts are provided by residues 147–149 (GDD), Ile186, and 195–199 (KMSKS). The short motif at 195–199 (KMSKS) is the 'KMSKS' region element.

Belongs to the class-I aminoacyl-tRNA synthetase family. Homodimer.

The protein localises to the cytoplasm. It catalyses the reaction tRNA(Trp) + L-tryptophan + ATP = L-tryptophyl-tRNA(Trp) + AMP + diphosphate + H(+). Catalyzes the attachment of tryptophan to tRNA(Trp). This is Tryptophan--tRNA ligase from Haemophilus influenzae (strain ATCC 51907 / DSM 11121 / KW20 / Rd).